The sequence spans 101 residues: Urease subunit beta (101 aa).

Belongs to the urease beta subunit family. In terms of assembly, heterotrimer of UreA (gamma), UreB (beta) and UreC (alpha) subunits. Three heterotrimers associate to form the active enzyme.

It localises to the cytoplasm. It carries out the reaction urea + 2 H2O + H(+) = hydrogencarbonate + 2 NH4(+). It participates in nitrogen metabolism; urea degradation; CO(2) and NH(3) from urea (urease route): step 1/1. This chain is Urease subunit beta, found in Rhodopseudomonas palustris (strain ATCC BAA-98 / CGA009).